The chain runs to 148 residues: Putative pre-16S rRNA nuclease (148 aa).

Belongs to the YqgF nuclease family.

Its subcellular location is the cytoplasm. In terms of biological role, could be a nuclease involved in processing of the 5'-end of pre-16S rRNA. This Chlamydia muridarum (strain MoPn / Nigg) protein is Putative pre-16S rRNA nuclease.